We begin with the raw amino-acid sequence, 153 residues long: Nucleoside diphosphate kinase (153 aa).

6 residues coordinate ATP: K13, F61, R89, T95, R106, and N116. H119 (pros-phosphohistidine intermediate) is an active-site residue.

The protein belongs to the NDK family. Mg(2+) serves as cofactor. In terms of tissue distribution, highest levels in the liver and kidney with lower levels in the heart, brain and breast muscle.

The protein localises to the cytoplasm. The protein resides in the cell membrane. The catalysed reaction is a 2'-deoxyribonucleoside 5'-diphosphate + ATP = a 2'-deoxyribonucleoside 5'-triphosphate + ADP. It carries out the reaction a ribonucleoside 5'-diphosphate + ATP = a ribonucleoside 5'-triphosphate + ADP. Functionally, major role in the synthesis of nucleoside triphosphates other than ATP. The ATP gamma phosphate is transferred to the NDP beta phosphate via a ping-pong mechanism, using a phosphorylated active-site intermediate. This Columba livia (Rock dove) protein is Nucleoside diphosphate kinase.